Consider the following 397-residue polypeptide: Staphyloferrin A transporter (397 aa).

The next 12 helical transmembrane spans lie at 10-30 (FLLF…VLTT), 39-59 (IVNF…GAIA), 67-87 (LLRI…VLTY), 93-110 (PISV…LSAV), 137-157 (FIIN…LAVY), 162-182 (TFLA…PLHF), 213-233 (IFIT…LLPV), 245-265 (IFGI…LVLP), 271-292 (IGMV…LGVV), 296-313 (IVIM…SQWA), 333-353 (VLSI…LMSI), and 358-378 (FGIV…TMVF).

It belongs to the major facilitator superfamily.

Its subcellular location is the cell membrane. Functionally, involved in staphyloferrin A secretion. In Staphylococcus aureus (strain NCTC 8325 / PS 47), this protein is Staphyloferrin A transporter.